The primary structure comprises 103 residues: Large ribosomal subunit protein bL21 (103 aa).

This sequence belongs to the bacterial ribosomal protein bL21 family. Part of the 50S ribosomal subunit. Contacts protein L20.

Its function is as follows. This protein binds to 23S rRNA in the presence of protein L20. This chain is Large ribosomal subunit protein bL21, found in Pectobacterium atrosepticum (strain SCRI 1043 / ATCC BAA-672) (Erwinia carotovora subsp. atroseptica).